Here is a 427-residue protein sequence, read N- to C-terminus: MEISQPSIGIFYISKVLALAPYATVRNSKGRVEIGRSWLFTVYSATLTVVMVFLTYRGLLFDANSEIPVRMKSATSKVVTALDVSVVVMAIVSGVYCGLFSLNDTLELNDRLNKIDNTLNAYNNFRRDRWRALGMAAVSLLAISILVGLDVGTWMRIAQDMNIAQSDTELNVHWYIPFYSLYFILTGLQVNIANTAYGLGRRFGRLNRMLSSSFLAENNATSAIKPQKVSTVKNVSVNRPAMPSALHASLTKLNGETLPSEAAAKNKGLLLKSLADSHESLGKCVHLLSNSFGIAVLFILVSCLLHLVATAYFLFLELLSKRDNGYLWVQMLWICFHFLRLLMVVEPCHLAARESRKTIQIVCEIERKVHEPILAEAVKKFWQQLLVVDADFSACGLCRVNRTILTSFASAIATYLVILIQFQRTNG.

Over 1–37 (MEISQPSIGIFYISKVLALAPYATVRNSKGRVEIGRS) the chain is Cytoplasmic. The chain crosses the membrane as a helical span at residues 38 to 63 (WLFTVYSATLTVVMVFLTYRGLLFDA). Residues 64–75 (NSEIPVRMKSAT) are Extracellular-facing. Arg-70 and Asp-83 together coordinate beta-D-fructose. A helical transmembrane segment spans residues 76–96 (SKVVTALDVSVVVMAIVSGVY). Residues 97 to 135 (CGLFSLNDTLELNDRLNKIDNTLNAYNNFRRDRWRALGM) lie on the Cytoplasmic side of the membrane. Residues 136–158 (AAVSLLAISILVGLDVGTWMRIA) form a helical membrane-spanning segment. At 159 to 168 (QDMNIAQSDT) the chain is on the extracellular side. Residues 169–193 (ELNVHWYIPFYSLYFILTGLQVNIA) traverse the membrane as a helical segment. Tyr-182 provides a ligand contact to beta-D-fructose. The Cytoplasmic segment spans residues 194-293 (NTAYGLGRRF…CVHLLSNSFG (100 aa)). Residues 294–316 (IAVLFILVSCLLHLVATAYFLFL) traverse the membrane as a helical segment. Thr-310 provides a ligand contact to beta-D-fructose. The Extracellular segment spans residues 317–324 (ELLSKRDN). A helical membrane pass occupies residues 325–346 (GYLWVQMLWICFHFLRLLMVVE). His-337 is a binding site for beta-D-fructose. The Cytoplasmic segment spans residues 347 to 402 (PCHLAARESRKTIQIVCEIERKVHEPILAEAVKKFWQQLLVVDADFSACGLCRVNR). A helical transmembrane segment spans residues 403–423 (TILTSFASAIATYLVILIQFQ). Gln-421 provides a ligand contact to Ca(2+). The Extracellular segment spans residues 424–427 (RTNG).

This sequence belongs to the insect chemoreceptor superfamily. Gustatory receptor (GR) family. Gr21a subfamily. In terms of assembly, homotetramer. In terms of tissue distribution, expressed in the adult labellar chemosensory neurons and in the adult head, abdomen, leg and wing. In larvae, is expressed in taste organs, as well as the brain and the gastrointestinal system.

It is found in the cell membrane. Its function is as follows. Gustatory receptor which mediates acceptance or avoidance behavior, depending on its substrates. Gr43a is the main sugar receptor in larvae. Functions as a narrowly tuned fructose receptor in taste neurons but also as a fructose receptor in the brain. Necessary and sufficient to sense hemolymph fructose and promote feeding in hungry flies but suppress feeding in satiated flies. The chain is Gustatory receptor for sugar taste 43a (Gr43a) from Drosophila melanogaster (Fruit fly).